The primary structure comprises 459 residues: uncharacterized protein (459 aa).

One can recognise a TRAM domain in the interval 7 to 65; that stretch reads PVNKNEIYTLTFEDLTHEGNGVAKIEGYPLFVPEVLPDEQAKVKVVKVNKNFGFGKLLE. Residues Cys-78, Cys-82, Cys-85, and Cys-164 each coordinate [4Fe-4S] cluster. The S-adenosyl-L-methionine site is built by Gln-288, Tyr-317, Glu-338, and Asp-386. Residue Cys-413 is the Nucleophile of the active site.

Belongs to the class I-like SAM-binding methyltransferase superfamily. RNA M5U methyltransferase family.

This is an uncharacterized protein from Oceanobacillus iheyensis (strain DSM 14371 / CIP 107618 / JCM 11309 / KCTC 3954 / HTE831).